Consider the following 310-residue polypeptide: Beta-lactamase AST-1 (310 aa).

Residues 1–31 form the signal peptide; sequence MTFSALPFRRADRRRLLAAALAACALTLTAA. The N-palmitoyl cysteine moiety is linked to residue Cys-32. The S-diacylglycerol cysteine moiety is linked to residue Cys-32. Catalysis depends on Ser-91, which acts as the Acyl-ester intermediate. Residue Ser-151 participates in substrate binding. Glu-187 functions as the Proton acceptor in the catalytic mechanism. 255–257 contributes to the substrate binding site; it reads KTG.

It belongs to the class-A beta-lactamase family.

It localises to the cell membrane. It catalyses the reaction a beta-lactam + H2O = a substituted beta-amino acid. Its activity is regulated as follows. Inhibited by clavulanic acid. In terms of biological role, confers high levels of resistance to amoxicillin, benzylpenicillin, piperacillin, ticarcillin and cephalothin. Not active against ceftazidime, cefotaxime and aztreonam. This is Beta-lactamase AST-1 (bla) from Nocardia asteroides.